A 376-amino-acid chain; its full sequence is Lipid-A-disaccharide synthase (376 aa).

The protein belongs to the LpxB family.

The catalysed reaction is a lipid X + a UDP-2-N,3-O-bis[(3R)-3-hydroxyacyl]-alpha-D-glucosamine = a lipid A disaccharide + UDP + H(+). It participates in bacterial outer membrane biogenesis; LPS lipid A biosynthesis. Functionally, condensation of UDP-2,3-diacylglucosamine and 2,3-diacylglucosamine-1-phosphate to form lipid A disaccharide, a precursor of lipid A, a phosphorylated glycolipid that anchors the lipopolysaccharide to the outer membrane of the cell. In Coxiella burnetii (strain CbuG_Q212) (Coxiella burnetii (strain Q212)), this protein is Lipid-A-disaccharide synthase.